We begin with the raw amino-acid sequence, 313 residues long: N-acetyl-gamma-glutamyl-phosphate reductase (313 aa).

Cysteine 117 is a catalytic residue.

The protein belongs to the NAGSA dehydrogenase family. Type 2 subfamily.

It is found in the cytoplasm. The enzyme catalyses N-acetyl-L-glutamate 5-semialdehyde + phosphate + NADP(+) = N-acetyl-L-glutamyl 5-phosphate + NADPH + H(+). The protein operates within amino-acid biosynthesis; L-arginine biosynthesis; N(2)-acetyl-L-ornithine from L-glutamate: step 3/4. Functionally, catalyzes the NADPH-dependent reduction of N-acetyl-5-glutamyl phosphate to yield N-acetyl-L-glutamate 5-semialdehyde. In Burkholderia cenocepacia (strain ATCC BAA-245 / DSM 16553 / LMG 16656 / NCTC 13227 / J2315 / CF5610) (Burkholderia cepacia (strain J2315)), this protein is N-acetyl-gamma-glutamyl-phosphate reductase.